The chain runs to 685 residues: Serotransferrin (685 aa).

Residues 1 to 16 (MKPLLLLPLLGCLATI) form the signal peptide. 2 consecutive Transferrin-like domains span residues 23-329 (VKWC…ALKI) and 340-666 (MKWC…SLRT). Cys-26 and Cys-48 are disulfide-bonded. Fe(3+) is bound by residues Asp-72 and Tyr-102. Intrachain disulfides connect Cys-125-Cys-206, Cys-170-Cys-184, and Cys-234-Cys-248. The hydrogencarbonate site is built by Thr-127, Lys-131, Ala-133, and Gly-134. Position 200 (Tyr-200) interacts with Fe(3+). His-256 serves as a coordination point for Fe(3+). 2 disulfide bridges follow: Cys-343/Cys-379 and Cys-353/Cys-370. Asp-394 and Tyr-428 together coordinate Fe(3+). 7 disulfide bridges follow: Cys-404-Cys-678, Cys-419-Cys-639, Cys-451-Cys-526, Cys-475-Cys-667, Cys-485-Cys-499, Cys-496-Cys-509, and Cys-566-Cys-580. Thr-453, Arg-457, Ala-459, and Gly-460 together coordinate hydrogencarbonate. N-linked (GlcNAc...) asparagine glycosylation is present at Asn-476. Tyr-520 lines the Fe(3+) pocket. A Fe(3+)-binding site is contributed by His-588.

It belongs to the transferrin family. Monomer.

The protein localises to the secreted. In terms of biological role, transferrins are iron binding transport proteins which can bind two Fe(3+) ions in association with the binding of an anion, usually bicarbonate. The polypeptide is Serotransferrin (tf) (Paralichthys olivaceus (Bastard halibut)).